Consider the following 104-residue polypeptide: Endogenous retrovirus group K member 21 Rec protein (104 aa).

A disordered region spans residues 1 to 48 (MHPSEMQRKAPPRRRRHRNRAPLTHKMNKMVTSEQMKLPSTKKAEPPT). Basic residues predominate over residues 10-20 (APPRRRRHRNR). The Nuclear localization signal motif lies at 13 to 20 (RRRRHRNR). A Nuclear export signal motif is present at residues 49–58 (WAQLKKLTQL).

Forms homodimers, homotrimers, and homotetramers via a C-terminal domain. Associates with XPO1 and with ZNF145.

The protein localises to the cytoplasm. It localises to the nucleus. Its subcellular location is the nucleolus. Its function is as follows. Retroviral replication requires the nuclear export and translation of unspliced, singly-spliced and multiply-spliced derivatives of the initial genomic transcript. Rec interacts with a highly structured RNA element (RcRE) present in the viral 3'LTR and recruits the cellular nuclear export machinery. This permits export to the cytoplasm of unspliced genomic or incompletely spliced subgenomic viral transcripts. This chain is Endogenous retrovirus group K member 21 Rec protein (ERVK-21), found in Homo sapiens (Human).